The chain runs to 314 residues: Probable manganese-dependent inorganic pyrophosphatase (314 aa).

Residues H10, D14, D16, D80, H102, and D154 each contribute to the Mn(2+) site.

This sequence belongs to the PPase class C family. It depends on Mn(2+) as a cofactor.

The protein localises to the cytoplasm. It catalyses the reaction diphosphate + H2O = 2 phosphate + H(+). In Lactococcus lactis subsp. lactis (strain IL1403) (Streptococcus lactis), this protein is Probable manganese-dependent inorganic pyrophosphatase (ppaC).